A 419-amino-acid chain; its full sequence is Metacaspase-1 (419 aa).

A disordered region spans residues 1–109 (MSGYPGYNNG…PPQGMHAFGQ (109 aa)). Pro residues-rich tracts occupy residues 18–37 (QYPPQPYYPPQPAYGAPPPQ) and 45–61 (QPPPPQQPYGYSQPPPQ). Residues 83–95 (SVNSNAYTNGNQN) show a composition bias toward polar residues. Active-site residues include histidine 210 and cysteine 266.

Belongs to the peptidase C14B family.

In terms of biological role, involved in cell death (apoptosis). This is Metacaspase-1 (casA) from Botryotinia fuckeliana (strain B05.10) (Noble rot fungus).